The following is a 644-amino-acid chain: Coiled-coil domain-containing protein 22 homolog (644 aa).

The tract at residues 316–341 (DEQKAAAMAGLSESGPPKMDTEEELQ) is disordered. Coiled coils occupy residues 333 to 383 (KMDT…NEQV), 409 to 486 (DAEN…GKDD), and 592 to 644 (GVIM…LKSS).

Belongs to the CCDC22 family.

This chain is Coiled-coil domain-containing protein 22 homolog, found in Nematostella vectensis (Starlet sea anemone).